Here is a 176-residue protein sequence, read N- to C-terminus: MTTIVSVRRHGKVVMAGDGQVSLGNTVMKGNAKKVRRLYHGQVLAGFAGATADAFTLFERFEGQLEKHQGHLVRAAVELAKDWRTDRSLSRLEAMLAVANKDASLIITGNGDVVEPEEGLIAMGSGGNFAQAAARALLMKTDLSALEVAQTALGIAGDICVFTNHHQTIEELDAAE.

Threonine 2 is a catalytic residue. Na(+)-binding residues include glycine 157, cysteine 160, and threonine 163.

The protein belongs to the peptidase T1B family. HslV subfamily. A double ring-shaped homohexamer of HslV is capped on each side by a ring-shaped HslU homohexamer. The assembly of the HslU/HslV complex is dependent on binding of ATP.

It is found in the cytoplasm. It carries out the reaction ATP-dependent cleavage of peptide bonds with broad specificity.. With respect to regulation, allosterically activated by HslU binding. Functionally, protease subunit of a proteasome-like degradation complex believed to be a general protein degrading machinery. This is ATP-dependent protease subunit HslV from Ectopseudomonas mendocina (strain ymp) (Pseudomonas mendocina).